The following is a 155-amino-acid chain: Protein FAM163B (155 aa).

A helical membrane pass occupies residues 6-26; the sequence is VVITGGILATVILLCIIAVLC.

It belongs to the FAM163 family.

The protein localises to the membrane. The polypeptide is Protein FAM163B (fam163b) (Xenopus tropicalis (Western clawed frog)).